The sequence spans 284 residues: Tryptophan 2,3-dioxygenase (284 aa).

Residues 53-57 (FIIQH) and arginine 119 each bind substrate. Histidine 242 lines the heme pocket. Threonine 256 serves as a coordination point for substrate.

Belongs to the tryptophan 2,3-dioxygenase family. In terms of assembly, homotetramer. Heme is required as a cofactor.

It carries out the reaction L-tryptophan + O2 = N-formyl-L-kynurenine. It functions in the pathway amino-acid degradation; L-tryptophan degradation via kynurenine pathway; L-kynurenine from L-tryptophan: step 1/2. The protein operates within siderophore biosynthesis; quinolobactin biosynthesis. In terms of biological role, heme-dependent dioxygenase that catalyzes the oxidative cleavage of the L-tryptophan (L-Trp) pyrrole ring and converts L-tryptophan to N-formyl-L-kynurenine. Catalyzes the oxidative cleavage of the indole moiety. Required for synthesis of the siderophore quinolobactin. The sequence is that of Tryptophan 2,3-dioxygenase from Pseudomonas fluorescens.